Consider the following 336-residue polypeptide: UDP-N-acetylenolpyruvoylglucosamine reductase (336 aa).

An FAD-binding PCMH-type domain is found at 1-178; it reads MAHSLQTLHT…TTVHLALPKE (178 aa). Arg-154 is a catalytic residue. The active-site Proton donor is the Ser-222. Glu-318 is a catalytic residue.

It belongs to the MurB family. Requires FAD as cofactor.

The protein localises to the cytoplasm. The catalysed reaction is UDP-N-acetyl-alpha-D-muramate + NADP(+) = UDP-N-acetyl-3-O-(1-carboxyvinyl)-alpha-D-glucosamine + NADPH + H(+). The protein operates within cell wall biogenesis; peptidoglycan biosynthesis. Functionally, cell wall formation. This chain is UDP-N-acetylenolpyruvoylglucosamine reductase, found in Pseudoalteromonas translucida (strain TAC 125).